The sequence spans 320 residues: Glyoxylate/hydroxypyruvate reductase B (320 aa).

Active-site residues include arginine 233 and glutamate 262. The active-site Proton donor is histidine 281.

The protein belongs to the D-isomer specific 2-hydroxyacid dehydrogenase family. GhrB subfamily. In terms of assembly, homodimer.

The protein localises to the cytoplasm. It carries out the reaction glycolate + NADP(+) = glyoxylate + NADPH + H(+). The catalysed reaction is (R)-glycerate + NAD(+) = 3-hydroxypyruvate + NADH + H(+). It catalyses the reaction (R)-glycerate + NADP(+) = 3-hydroxypyruvate + NADPH + H(+). Catalyzes the NADPH-dependent reduction of glyoxylate and hydroxypyruvate into glycolate and glycerate, respectively. This Pectobacterium carotovorum subsp. carotovorum (strain PC1) protein is Glyoxylate/hydroxypyruvate reductase B.